Reading from the N-terminus, the 208-residue chain is MIVIKDAHFLTSSSQLFQCPASLTSEMVILGRSNVGKSSFINTLLGKNLAKSSATPGKTRLANFFSTTWEDKENALTTTFNVIDLPGFGYAKVSKNLKKEWEGFLWELLSVRVSIKLFIHLVDARHLNLEIDKNAKENIQALLRPDQAYLSLFTKFDKLNKNEQHRLFLNAPKPFLINTTHFNALSSKYPTLEIVRQTLLKYLLTNPL.

The region spanning 23-205 (LTSEMVILGR…RQTLLKYLLT (183 aa)) is the EngB-type G domain. Residues 31–38 (GRSNVGKS), 57–61 (GKTRL), 84–87 (DLPG), 154–157 (TKFD), and 182–184 (FNA) contribute to the GTP site. Positions 38 and 59 each coordinate Mg(2+).

It belongs to the TRAFAC class TrmE-Era-EngA-EngB-Septin-like GTPase superfamily. EngB GTPase family. It depends on Mg(2+) as a cofactor.

Its function is as follows. Necessary for normal cell division and for the maintenance of normal septation. The sequence is that of Probable GTP-binding protein EngB from Helicobacter pylori (strain HPAG1).